Reading from the N-terminus, the 469-residue chain is DNA-binding transcriptional regulator NtrC (469 aa).

One can recognise a Response regulatory domain in the interval 5–119 (IVWVVDDDSS…EAVALVERAI (115 aa)). Asp54 carries the 4-aspartylphosphate modification. A Sigma-54 factor interaction domain is found at 140 to 369 (MIGEAPAMQD…LENTCRWLTV (230 aa)). Residues 168–175 (GESGTGKE) and 231–240 (ADGGTLFLDE) each bind ATP. A DNA-binding region (H-T-H motif) is located at residues 445 to 464 (KQEAARLLGWGRNTLTRKLK).

In terms of processing, phosphorylated and dephosphorylated by NtrB.

It is found in the cytoplasm. Functionally, member of the two-component regulatory system NtrB/NtrC, which controls expression of the nitrogen-regulated (ntr) genes in response to nitrogen limitation. Phosphorylated NtrC binds directly to DNA and stimulates the formation of open promoter-sigma54-RNA polymerase complexes. In Salmonella typhimurium (strain LT2 / SGSC1412 / ATCC 700720), this protein is DNA-binding transcriptional regulator NtrC (glnG).